We begin with the raw amino-acid sequence, 587 residues long: Arginine--tRNA ligase (587 aa).

Residues alanine 126 to histidine 136 carry the 'HIGH' region motif.

Belongs to the class-I aminoacyl-tRNA synthetase family. As to quaternary structure, monomer.

It localises to the cytoplasm. The enzyme catalyses tRNA(Arg) + L-arginine + ATP = L-arginyl-tRNA(Arg) + AMP + diphosphate. The chain is Arginine--tRNA ligase from Aromatoleum aromaticum (strain DSM 19018 / LMG 30748 / EbN1) (Azoarcus sp. (strain EbN1)).